A 161-amino-acid polypeptide reads, in one-letter code: Small ribosomal subunit protein eS6 (161 aa).

The segment at 119-161 (VLLGEEEPEDADDDGDSDVDADEATDTDAGSEEDNDDDIADAE) is disordered. The segment covering 122 to 161 (GEEEPEDADDDGDSDVDADEATDTDAGSEEDNDDDIADAE) has biased composition (acidic residues).

The protein belongs to the eukaryotic ribosomal protein eS6 family.

This chain is Small ribosomal subunit protein eS6, found in Haloquadratum walsbyi (strain DSM 16790 / HBSQ001).